A 93-amino-acid polypeptide reads, in one-letter code: Small ribosomal subunit protein uS17 (93 aa).

It belongs to the universal ribosomal protein uS17 family. Part of the 30S ribosomal subunit.

One of the primary rRNA binding proteins, it binds specifically to the 5'-end of 16S ribosomal RNA. The protein is Small ribosomal subunit protein uS17 of Rhodococcus erythropolis (strain PR4 / NBRC 100887).